Here is a 447-residue protein sequence, read N- to C-terminus: Ribosomal protein uS12 methylthiotransferase RimO (447 aa).

One can recognise an MTTase N-terminal domain in the interval 4-114 (PKVGFVSLGC…VMEAVHEYVP (111 aa)). [4Fe-4S] cluster is bound by residues Cys13, Cys49, Cys78, Cys147, Cys151, and Cys154. The region spanning 133–370 (LTPKHYAYLK…MQVQQQISAA (238 aa)) is the Radical SAM core domain. Residues 373-443 (QKRIGQTMTV…EYDLFAKLIK (71 aa)) form the TRAM domain.

It belongs to the methylthiotransferase family. RimO subfamily. The cofactor is [4Fe-4S] cluster.

It localises to the cytoplasm. The catalysed reaction is L-aspartate(89)-[ribosomal protein uS12]-hydrogen + (sulfur carrier)-SH + AH2 + 2 S-adenosyl-L-methionine = 3-methylsulfanyl-L-aspartate(89)-[ribosomal protein uS12]-hydrogen + (sulfur carrier)-H + 5'-deoxyadenosine + L-methionine + A + S-adenosyl-L-homocysteine + 2 H(+). Functionally, catalyzes the methylthiolation of an aspartic acid residue of ribosomal protein uS12. The polypeptide is Ribosomal protein uS12 methylthiotransferase RimO (Acinetobacter baumannii (strain AB0057)).